Consider the following 1069-residue polypeptide: MDFSKENTQIRYLNSLLVPETGSTSIPDDTLDRHCLKTETTTENLVAALGGSGLIVLFPNSPSGLLGAHYTKTPQGSLIFDKAITTSQDLKKAYNYARLVSRIVQVRSSTLPAGVYALNGTFNGVTYIGSLSEIKDLDYNSLLSATANINDKVGNVLVGDGVAVLSLPAGSDLPYVRLGDEVPSSAGVARCSPSDRPRHYNANNKQVQVGTTDTKTNGFNIDATTPTEVTVDMQIAQIAAGKTLTVTVKLMGLTGAKVASRSETVSGNGGTFHFSTTAVFGETEITQPVVGVQVLAKTNGDPIVVDSYVGVTVHGGNMPGTLRPVTIIAYESVATGSVLTLSGISNYELIPNPELAKNIQTSYGKLNPAEMTYTKVVLSHRDELGLRSIWSIPQYRDMMSYFREVSDRSSPLKIAGAFGWGDLLSGIRKWVFPVVDTLLPAARPLTDLASGWIKNKYPEAASGRPLAASGRPMAASGTFSKRIPLASSDEIDYQSVLALTIPGTHPKLVPPTEREPNSTPDGHKITGAKTKDNTGGDVTVVKPLDWLFKLPCLRPQAADLPISLLQTLAYKQPLGRNSRIVHFTDGALFPVVAFGDNHSTSELYIAVRGDHRDLMSPDVRDSYALTGDDHKVWGATHHTYYVEGAPKKPLKFNVKTRTDLTILPVADVFWRADGSADVDVVWNDMPAVAGQSSSIALALASSLPFVPKAAYTGCLSGTNVQPVQFGNLKARAAHKIGLPLVGMTQDGGEDTRICTLDDAADHAFDSMESTVTRPESVGHQAAFQGWFYCGAADEETIEELEDFLDSIELHSKPTVEQPQTEEAMELLMELARKDPQMSKILVILGWVEGAGLIDALYNWAQLDDGGVRMRNMLRNLPHEGSKSQRRKHGPAPESRESTRMEVLRREAAAKRKKAQRISEDAMDNGFEFATIDWVLENGSRGPNPAQAKYYKATGLDPEPGLTEFLPEPTHAPENKAAKLAATIYGSPNQAPAPPEFVEEVAAVLMENNGRGPNQAQMRELRLKALTMKSGSGAAATFKPRNRRPAQEYQPRPPITSRAGRFLNISTTLS.

An a divalent metal cation-binding site is contributed by Asp28. The tract at residues 504–534 (THPKLVPPTEREPNSTPDGHKITGAKTKDNT) is disordered. Residues 512–534 (TEREPNSTPDGHKITGAKTKDNT) are compositionally biased toward basic and acidic residues. The region spanning 558 to 791 (ADLPISLLQT…AFQGWFYCGA (234 aa)) is the Peptidase S50 domain. Ser692 serves as the catalytic Nucleophile. Lys729 is an active-site residue. 2 disordered regions span residues 876 to 900 (LPHE…STRM) and 1031 to 1069 (SGAA…TTLS).

As to quaternary structure, homotrimer. A central divalent metal stabilizes the VP2 trimer. In terms of assembly, homodimer. Interacts (via C-terminus) with VP1 in the cytoplasm. Interacts with VP2. Specific enzymatic cleavages yield mature proteins. The capsid assembly seems to be regulated by polyprotein processing. The protease VP4 cleaves itself off the polyprotein, thus releasing pre-VP2 and VP3 within the infected cell. During capsid assembly, the C-terminus of pre-VP2 is further processed by VP4, giving rise to VP2, the external capsid protein and three small peptides that all stay closely associated with the capsid. Post-translationally, the N-termini of VP2 and VP3 are blocked.

It is found in the virion. The protein resides in the host cytoplasm. Its function is as follows. Capsid protein VP2 self assembles to form an icosahedral capsid with a T=13 symmetry, about 70 nm in diameter, and consisting of 260 VP2 trimers. The capsid encapsulates the genomic dsRNA. VP2 is also involved in attachment and entry into the host cell. The precursor of VP2 plays an important role in capsid assembly. First, pre-VP2 and VP2 oligomers assemble to form a procapsid. Then, the pre-VP2 intermediates may be processed into VP2 proteins by proteolytic cleavage mediated by VP4 to obtain the mature virion. The final capsid is composed of pentamers and hexamers but VP2 has a natural tendency to assemble into all-pentameric structures. Therefore pre-VP2 may be required to allow formation of the hexameric structures. Functionally, protease VP4 is a serine protease that cleaves the polyprotein into its final products. Pre-VP2 is first partially cleaved, and may be completely processed by VP4 upon capsid maturation. In terms of biological role, capsid protein VP3 plays a key role in virion assembly by providing a scaffold for the capsid made of VP2. May self-assemble to form a T=4-like icosahedral inner-capsid composed of at least 180 trimers. Plays a role in genomic RNA packaging by recruiting VP1 into the capsid and interacting with the dsRNA genome segments to form a ribonucleoprotein complex. Additionally, the interaction of the VP3 C-terminal tail with VP1 removes the inherent structural blockade of the polymerase active site. Thus, VP3 can also function as a transcriptional activator. Its function is as follows. Structural peptide 1 is a small peptide derived from pre-VP2 C-terminus. It destabilizes and perforates cell membranes, suggesting a role during entry. Structural peptide 2 is a small peptide derived from pre-VP2 C-terminus. It is not essential for the virus viability, but viral growth is affected when missing. Functionally, structural peptide 3 is a small peptide derived from pre-VP2 C-terminus. It is not essential for the virus viability, but viral growth is affected when missing. In terms of biological role, structural peptide 4 is a small peptide derived from pre-VP2 C-terminus. It is essential for the virus viability. The polypeptide is Structural polyprotein (Channa lucius (Forest snakehead)).